The primary structure comprises 389 residues: Chalcone synthase J (389 aa).

The active site involves cysteine 164.

This sequence belongs to the thiolase-like superfamily. Chalcone/stilbene synthases family.

It carries out the reaction (E)-4-coumaroyl-CoA + 3 malonyl-CoA + 3 H(+) = 2',4,4',6'-tetrahydroxychalcone + 3 CO2 + 4 CoA. It functions in the pathway secondary metabolite biosynthesis; flavonoid biosynthesis. The primary product of this enzyme is 4,2',4',6'-tetrahydroxychalcone (also termed naringenin-chalcone or chalcone) which can under specific conditions spontaneously isomerize into naringenin. This chain is Chalcone synthase J (CHSJ), found in Petunia hybrida (Petunia).